A 400-amino-acid chain; its full sequence is Telomeric repeat-binding factor 2-interacting protein 1 (400 aa).

At A2 the chain carries N-acetylalanine. Phosphoserine is present on residues S36 and S43. The BRCT domain maps to 78 to 101 (FISTQYILDCVERNERLELEAYRL). The disordered stretch occupies residues 105–126 (SAADTGSEAKPGALAEGAAEPE). A compositionally biased stretch (low complexity) spans 112–125 (EAKPGALAEGAAEP). Residue K114 forms a Glycyl lysine isopeptide (Lys-Gly) (interchain with G-Cter in SUMO2) linkage. Positions 128-188 (QRLAGRIAFT…SLKDRYLKHL (61 aa)) constitute a Myb-like domain. S154 and S156 each carry phosphoserine. K194 is covalently cross-linked (Glycyl lysine isopeptide (Lys-Gly) (interchain with G-Cter in SUMO2)). 2 disordered regions span residues 196–244 (LLGD…EEIQ) and 264–311 (VVVD…SQPE). Phosphoserine occurs at positions 203 and 206. Glycyl lysine isopeptide (Lys-Gly) (interchain with G-Cter in SUMO2) cross-links involve residues K208, K212, and K240. A compositionally biased stretch (acidic residues) spans 280–305 (CDDDPPTPEEDSETQPDEEEEEEEEE). A Glycyl lysine isopeptide (Lys-Gly) (interchain with G-Cter in SUMO2) cross-link involves residue K373. The Nuclear localization signal signature appears at 384-400 (KKFGAQNVARRIEFRKK).

This sequence belongs to the RAP1 family. Associates with the I-kappa-B-kinase (IKK) core complex, composed of CHUK, IKBKB and IKBKG. Homodimer. Component of the shelterin complex (telosome) composed of TERF1, TERF2, TINF2, TERF2IP ACD and POT1. Interacts with TERF2 (but not TERF1) with its C-terminus. Interacts with SLX4/BTBD12. Interacts with TERF2; the interaction is direct.

It localises to the nucleus. The protein localises to the cytoplasm. It is found in the chromosome. The protein resides in the telomere. In terms of biological role, acts both as a regulator of telomere function and as a transcription regulator. Involved in the regulation of telomere length and protection as a component of the shelterin complex (telosome). In contrast to other components of the shelterin complex, it is dispensible for telomere capping and does not participate in the protection of telomeres against non-homologous end-joining (NHEJ)-mediated repair. Instead, it is required to negatively regulate telomere recombination and is essential for repressing homology-directed repair (HDR), which can affect telomere length. Does not bind DNA directly: recruited to telomeric double-stranded 5'-TTAGGG-3' repeats via its interaction with TERF2. Independently of its function in telomeres, also acts as a transcription regulator: recruited to extratelomeric 5'-TTAGGG-3' sites via its association with TERF2 or other factors, and regulates gene expression. When cytoplasmic, associates with the I-kappa-B-kinase (IKK) complex and acts as a regulator of the NF-kappa-B signaling by promoting IKK-mediated phosphorylation of RELA/p65, leading to activate expression of NF-kappa-B target genes. This chain is Telomeric repeat-binding factor 2-interacting protein 1 (TERF2IP), found in Macaca fascicularis (Crab-eating macaque).